The primary structure comprises 335 residues: Adenosine deaminase (335 aa).

Residues histidine 12 and histidine 14 each coordinate Zn(2+). Histidine 14 and aspartate 16 together coordinate substrate. Zn(2+) is bound at residue histidine 197. Glutamate 200 acts as the Proton donor in catalysis. Aspartate 278 provides a ligand contact to Zn(2+).

It belongs to the metallo-dependent hydrolases superfamily. Adenosine and AMP deaminases family. Adenosine deaminase subfamily. It depends on Zn(2+) as a cofactor.

It catalyses the reaction adenosine + H2O + H(+) = inosine + NH4(+). The catalysed reaction is 2'-deoxyadenosine + H2O + H(+) = 2'-deoxyinosine + NH4(+). Its function is as follows. Catalyzes the hydrolytic deamination of adenosine and 2-deoxyadenosine. The polypeptide is Adenosine deaminase (Clostridium botulinum (strain Okra / Type B1)).